Reading from the N-terminus, the 974-residue chain is Probable proton ATPase 1A (974 aa).

Positions 1-23 (MSSKKYELDAAAFEDKPESHSDA) are enriched in basic and acidic residues. The tract at residues 1–61 (MSSKKYELDA…ATDLLPPSKG (61 aa)) is disordered. Topologically, residues 1 to 92 (MSSKKYELDA…KTPSWLIYVR (92 aa)) are cytoplasmic. The helical transmembrane segment at 93-112 (GLWGPMPAALWIAIIIEFAL) threads the bilayer. Topologically, residues 113–117 (ENWPD) are extracellular. The helical transmembrane segment at 118–137 (GAILFAIQIANATIGWYETI) threads the bilayer. At 138-264 (KAGDAVAALK…LGNIHVILRR (127 aa)) the chain is on the cytoplasmic side. Residues 265–286 (VMFSLCAISFMLCMCCFIYLLA) form a helical membrane-spanning segment. The Extracellular segment spans residues 287–294 (RFYETFRH). Residues 295–321 (ALQFAVVVLVVSIPIALEIVVTTTLAV) form a helical membrane-spanning segment. At 322-630 (GSKHLSKHKI…AVHGATDAAR (309 aa)) the chain is on the cytoplasmic side. Asp-351 functions as the 4-aspartylphosphate intermediate in the catalytic mechanism. The Mg(2+) site is built by Asp-605 and Asp-609. A helical membrane pass occupies residues 631 to 651 (AAADMVLTEPGLSVVVEAMLV). Residues 652 to 661 (SREVFQRMLS) lie on the Extracellular side of the membrane. A helical transmembrane segment spans residues 662 to 684 (FLTYRISATLQLVCFFFIACFSL). At 685–697 (TPKAYGSVDPHFQ) the chain is on the cytoplasmic side. Residues 698-712 (FFHLPVLMFMLITLL) traverse the membrane as a helical segment. Over 713-737 (NDGCLMTIGYDHVIPSERPQKWNLP) the chain is Extracellular. Asp-714 serves as a coordination point for Mg(2+). The helical transmembrane segment at 738-761 (VVFVSASILAAVACGSSLMLLWIG) threads the bilayer. Topologically, residues 762–812 (LEGYSSQYYENSWFHRLGLAQLPQGKLVTMMYLKISISDFLTLFSSRTGGH) are cytoplasmic. A helical membrane pass occupies residues 813–840 (FFFYMPPSPILFCGAIISLLVSTMAASF). At 841 to 868 (WHKSRPDNVLTEGLAWGQTNAEKLLPLW) the chain is on the extracellular side. The helical transmembrane segment at 869–887 (VWIYCIVWWFVQDVVKVLA) threads the bilayer. Over 888–974 (HICMDAVDLF…VNVYVSRDQK (87 aa)) the chain is Cytoplasmic. Basic and acidic residues predominate over residues 950 to 959 (GLREDTHSPI). Positions 950-974 (GLREDTHSPIEEASPVNVYVSRDQK) are disordered.

This sequence belongs to the cation transport ATPase (P-type) (TC 3.A.3) family. Type IIIA subfamily.

The protein resides in the membrane. The catalysed reaction is ATP + H2O + H(+)(in) = ADP + phosphate + 2 H(+)(out). This chain is Probable proton ATPase 1A (H1A), found in Leishmania donovani.